The sequence spans 491 residues: Glucose-6-phosphate exchanger SLC37A2 (491 aa).

The helical transmembrane segment at 5–25 threads the bilayer; the sequence is LAPGIWYRAFILLITFLIYTC. Residues N43, N52, and N58 are each glycosylated (N-linked (GlcNAc...) asparagine). A run of 5 helical transmembrane segments spans residues 78–98, 108–130, 132–154, 169–189, and 200–220; these read GAVD…SGIF, LTAG…FWNI, VLWY…WPAV, LIMG…SLLA, and SFVV…FFLI. Residues 229-257 are disordered; that stretch reads SPPQHHGNPEESQDQPEDPANGPSCNKES. Transmembrane regions (helical) follow at residues 292–312, 328–348, 352–372, 377–397, 424–444, and 452–472; these read LCLL…PLYI, TLFD…SDYI, ATTC…YNHV, IGIS…PYAL, AIID…AGLI, and VFYM…RLVY.

This sequence belongs to the major facilitator superfamily. Organophosphate:Pi antiporter (OPA) (TC 2.A.1.4) family.

The protein resides in the endoplasmic reticulum membrane. It catalyses the reaction D-glucose 6-phosphate(in) + phosphate(out) = D-glucose 6-phosphate(out) + phosphate(in). Its activity is regulated as follows. Inhibited by vanadate but not by chlorogenic acid. In terms of biological role, inorganic phosphate and glucose-6-phosphate antiporter. May transport cytoplasmic glucose-6-phosphate into the lumen of the endoplasmic reticulum and translocate inorganic phosphate into the opposite direction. Independent of a lumenal glucose-6-phosphatase. May not play a role in homeostatic regulation of blood glucose levels. The protein is Glucose-6-phosphate exchanger SLC37A2 of Bos taurus (Bovine).